The sequence spans 508 residues: MHSAMSFLLLFSLCFLIHCFVFLLIKKKKAKTMDAKTVPPGPKKLPIIGNLHQLGKLPHRSLRCLSNEYGPLMLMQLGSVPALVVSSADTAREVFKRHDLAFSGRPAFYVAKKLTYDYSDITLAPYGEYWREVKKILVLELLSAKKVQSFEAIRDEEVARMVNFIARSSNPVNLSRLALSLSNNVICRIAFGKISGYEDGSEAKSKFEDIFHETEDFFGTVNIADFFPALSWINKFNGVETRLKENFKKLDSFLNQVIEEHLDSRRSKTEKEDIVDALLRIQGNPNETITLSSENIKGILVTVLLGGSDTSTAVLVWTMAELMRNPMVRRKAQQEVREIIKGQGKVGESDLSRLEYLKLIIKESLRLHPPGPLLIPRETIECCTIEGYKIPAKTRVFINAAAIATDSKVWENPYAFKPERFMDKTVDFKGEDFEMLPFGAGRRGCPGMNFAVPLIGLALANLLLQFDWKLPEGMIAEDLEMEEAPGITVHKKIPLCLVASPNRCAAQD.

Residues 5-25 (MSFLLLFSLCFLIHCFVFLLI) traverse the membrane as a helical segment. C445 provides a ligand contact to heme.

Belongs to the cytochrome P450 family. It depends on heme as a cofactor.

It is found in the membrane. The enzyme catalyses beta-colubrine + reduced [NADPH--hemoprotein reductase] + O2 = 11-demethylbrucine + oxidized [NADPH--hemoprotein reductase] + H2O + H(+). Its pathway is alkaloid biosynthesis. In terms of biological role, monooxygenase involved in the biosynthesis of curare monoterpene indole alkaloids (MIAs), natural products such as strychnine, a neurotoxic compound used as a pesticide to control rodents, and its pharmacologically active derivatives, including brucine, used to regulate blood pressure. Curare alkaloids act as animal glycine receptor antagonists. Catalyzes the conversion of beta-colubrine to 11-deMe brucine. The sequence is that of Strychnine-11-hydroxylase from Strychnos nux-vomica (Poison nut).